We begin with the raw amino-acid sequence, 101 residues long: Apolipoprotein C-III (101 aa).

Positions 1–20 (MQPRMLLIVALVALLASARA) are cleaved as a signal peptide. The residue at position 64 (Met64) is a Methionine sulfoxide. Residues 69–101 (KSLKGYWSKFTDKFTGLWESGPEDQLTTPTLEP) are lipid-binding. A glycan (O-linked (GalNAc...) threonine) is linked at Thr96.

This sequence belongs to the apolipoprotein C3 family. In terms of processing, the most abundant glycoforms are characterized by an O-linked disaccharide galactose linked to N-acetylgalactosamine (Gal-GalNAc), further modified with up to 3 sialic acid residues. Less abundant glycoforms are characterized by more complex and fucosylated glycan moieties. O-glycosylated on Thr-96 with a core 1 or possibly core 8 glycan. In terms of tissue distribution, synthesized predominantly in liver and to a lesser degree in intestine.

It localises to the secreted. Its function is as follows. Component of triglyceride-rich very low density lipoproteins (VLDL) and high density lipoproteins (HDL) in plasma. Plays a multifaceted role in triglyceride homeostasis. Intracellularly, promotes hepatic very low density lipoprotein 1 (VLDL1) assembly and secretion; extracellularly, attenuates hydrolysis and clearance of triglyceride-rich lipoproteins (TRLs). Impairs the lipolysis of TRLs by inhibiting lipoprotein lipase and the hepatic uptake of TRLs by remnant receptors. Formed of several curved helices connected via semiflexible hinges, so that it can wrap tightly around the curved micelle surface and easily adapt to the different diameters of its natural binding partners. The sequence is that of Apolipoprotein C-III (Apoc3) from Rattus norvegicus (Rat).